The chain runs to 249 residues: Solute carrier family 25 member 35 (249 aa).

Solcar repeat units follow at residues 1 to 90 (MDFL…AEAG) and 152 to 243 (QSWK…LRMV). 4 consecutive transmembrane segments (helical) span residues 38–58 (TYQR…KVDG), 59–79 (LAAL…MNGI), 154–174 (WKVA…AMTP), and 226–249 (LGPH…TYTK).

Belongs to the mitochondrial carrier (TC 2.A.29) family.

It localises to the mitochondrion inner membrane. It catalyses the reaction a dicarboxylate(in) + sulfate(out) = a dicarboxylate(out) + sulfate(in). In terms of biological role, putative antiporter that exchanges dicarboxylates and sulfur oxoanions across the inner membrane of mitochondria. This chain is Solute carrier family 25 member 35 (SLC25A35), found in Bos taurus (Bovine).